A 445-amino-acid polypeptide reads, in one-letter code: Amino-acid acetyltransferase (445 aa).

Residues 299–438 (EQVRQAQIDD…QGLYNYQRNS (140 aa)) form the N-acetyltransferase domain.

The protein belongs to the acetyltransferase family. ArgA subfamily.

The protein localises to the cytoplasm. The catalysed reaction is L-glutamate + acetyl-CoA = N-acetyl-L-glutamate + CoA + H(+). It participates in amino-acid biosynthesis; L-arginine biosynthesis; N(2)-acetyl-L-ornithine from L-glutamate: step 1/4. This chain is Amino-acid acetyltransferase, found in Vibrio atlanticus (strain LGP32) (Vibrio splendidus (strain Mel32)).